A 428-amino-acid chain; its full sequence is Enolase (428 aa).

(2R)-2-phosphoglycerate is bound at residue Gln173. The active-site Proton donor is the Glu217. Mg(2+) is bound by residues Asp253, Glu294, and Asp320. Lys345, Arg374, Ser375, and Lys396 together coordinate (2R)-2-phosphoglycerate. Lys345 serves as the catalytic Proton acceptor.

This sequence belongs to the enolase family. Mg(2+) is required as a cofactor.

Its subcellular location is the cytoplasm. It is found in the secreted. The protein resides in the cell surface. It carries out the reaction (2R)-2-phosphoglycerate = phosphoenolpyruvate + H2O. Its pathway is carbohydrate degradation; glycolysis; pyruvate from D-glyceraldehyde 3-phosphate: step 4/5. Functionally, catalyzes the reversible conversion of 2-phosphoglycerate (2-PG) into phosphoenolpyruvate (PEP). It is essential for the degradation of carbohydrates via glycolysis. This Methanosarcina mazei (strain ATCC BAA-159 / DSM 3647 / Goe1 / Go1 / JCM 11833 / OCM 88) (Methanosarcina frisia) protein is Enolase.